The sequence spans 205 residues: MSGAAAAAARALPKAVTFVTGNAKKLEEVRAILGSSIPFQSLKLDLPELQGEPEDISKEKARMAASQVNGPVLVEDTCLCFNALKGLPGPYIKWFLEKTGHEGLNNLLLAYEDKSAFAMCIFSLALGPGEEPMTFVGKTAGKIVPARGPADFGWDPVFQPDGFDQTYAEMPKSVKNQISHRGKALALVKEHFAAANYKVQNDGSA.

20–25 (TGNAKK) is a binding site for ITP. E48 lines the Mg(2+) pocket. ITP-binding positions include K60, 76-77 (DT), K93, 152-155 (FGWD), K175, and 180-181 (HR).

It belongs to the HAM1 NTPase family. Homodimer. Mg(2+) serves as cofactor. The cofactor is Mn(2+).

It is found in the cytoplasm. It catalyses the reaction ITP + H2O = IMP + diphosphate + H(+). The enzyme catalyses dITP + H2O = dIMP + diphosphate + H(+). The catalysed reaction is XTP + H2O = XMP + diphosphate + H(+). Pyrophosphatase that hydrolyzes non-canonical purine nucleotides such as inosine triphosphate (ITP), deoxyinosine triphosphate (dITP) or xanthosine 5'-triphosphate (XTP) to their respective monophosphate derivatives. The enzyme does not distinguish between the deoxy- and ribose forms. Probably excludes non-canonical purines from RNA and DNA precursor pools, thus preventing their incorporation into RNA and DNA and avoiding chromosomal lesions. This chain is Inosine triphosphate pyrophosphatase, found in Oryza sativa subsp. japonica (Rice).